Here is a 230-residue protein sequence, read N- to C-terminus: 7-cyano-7-deazaguanine synthase (230 aa).

9-19 (LSGGLDSATTA) provides a ligand contact to ATP. Residues Cys190, Cys198, Cys201, and Cys204 each contribute to the Zn(2+) site.

Belongs to the QueC family. Zn(2+) is required as a cofactor.

The enzyme catalyses 7-carboxy-7-deazaguanine + NH4(+) + ATP = 7-cyano-7-deazaguanine + ADP + phosphate + H2O + H(+). It functions in the pathway purine metabolism; 7-cyano-7-deazaguanine biosynthesis. Functionally, catalyzes the ATP-dependent conversion of 7-carboxy-7-deazaguanine (CDG) to 7-cyano-7-deazaguanine (preQ(0)). The polypeptide is 7-cyano-7-deazaguanine synthase (Microcystis aeruginosa (strain NIES-843 / IAM M-2473)).